Here is a 170-residue protein sequence, read N- to C-terminus: Single-stranded DNA-binding protein (170 aa).

The tract at residues 1 to 26 is oligomerization; sequence MSNELKQVEQTEEAVVVSETKDYIKV.

This sequence belongs to the phi29likevirus single-strand-binding protein family. In terms of assembly, hexamer.

Its function is as follows. Single-stranded DNA-binding protein required for the elongation during viral DNA replication by strand displacement. Displaced viral DNA strands are transiently coated with the ssDNA-binding protein and therefore protected againt nucleases. The latter is then probably removed by the replisome that performs lagging strand synthesis or during the events that lead up to the recombination process. Has helix-destabilizing activity since it removes secondary structure from the ssDNA in replicative intermediates. The chain is Single-stranded DNA-binding protein from Bacillus subtilis (Bacteriophage GA-1).